Here is a 272-residue protein sequence, read N- to C-terminus: Probable nitrilase C965.09 (272 aa).

In terms of domain architecture, CN hydrolase spans 3-244 (ANIACVQMAP…EGVISYTVDL (242 aa)). Glu45 acts as the Proton acceptor in catalysis. Lys118 functions as the Proton donor in the catalytic mechanism. The Nucleophile role is filled by Cys150.

This sequence belongs to the carbon-nitrogen hydrolase superfamily.

It localises to the cytoplasm. The protein localises to the nucleus. This chain is Probable nitrilase C965.09, found in Schizosaccharomyces pombe (strain 972 / ATCC 24843) (Fission yeast).